Reading from the N-terminus, the 262-residue chain is Acyl-[acyl-carrier-protein]--UDP-N-acetylglucosamine O-acyltransferase (262 aa).

The protein belongs to the transferase hexapeptide repeat family. LpxA subfamily. Homotrimer.

It localises to the cytoplasm. It catalyses the reaction a (3R)-hydroxyacyl-[ACP] + UDP-N-acetyl-alpha-D-glucosamine = a UDP-3-O-[(3R)-3-hydroxyacyl]-N-acetyl-alpha-D-glucosamine + holo-[ACP]. It participates in glycolipid biosynthesis; lipid IV(A) biosynthesis; lipid IV(A) from (3R)-3-hydroxytetradecanoyl-[acyl-carrier-protein] and UDP-N-acetyl-alpha-D-glucosamine: step 1/6. In terms of biological role, involved in the biosynthesis of lipid A, a phosphorylated glycolipid that anchors the lipopolysaccharide to the outer membrane of the cell. This chain is Acyl-[acyl-carrier-protein]--UDP-N-acetylglucosamine O-acyltransferase, found in Shigella flexneri serotype 5b (strain 8401).